Here is a 131-residue protein sequence, read N- to C-terminus: MNLIQTLEKEQFDKLSAGRVIPEFGPGDTVIVNVKVVEGERSRVQAYEGVCIGRSGGGINESFTVRKISYGEGVERVFPLLSPMIDSIKVVRRGKVRRAKLYYLRNLRGKSARITEKKQDRPAKVVAGAAE.

Belongs to the bacterial ribosomal protein bL19 family.

Functionally, this protein is located at the 30S-50S ribosomal subunit interface and may play a role in the structure and function of the aminoacyl-tRNA binding site. The sequence is that of Large ribosomal subunit protein bL19 from Rhodopseudomonas palustris (strain BisA53).